A 183-amino-acid polypeptide reads, in one-letter code: Translation initiation factor IF-3 (183 aa).

This sequence belongs to the IF-3 family. Monomer.

It is found in the cytoplasm. IF-3 binds to the 30S ribosomal subunit and shifts the equilibrium between 70S ribosomes and their 50S and 30S subunits in favor of the free subunits, thus enhancing the availability of 30S subunits on which protein synthesis initiation begins. The protein is Translation initiation factor IF-3 of Pseudomonas aeruginosa (strain ATCC 15692 / DSM 22644 / CIP 104116 / JCM 14847 / LMG 12228 / 1C / PRS 101 / PAO1).